The primary structure comprises 500 residues: Glutamate--tRNA ligase (500 aa).

Positions Pro-12–Asn-22 match the 'HIGH' region motif. The short motif at Lys-259–Arg-263 is the 'KMSKS' region element. Residue Lys-262 coordinates ATP.

The protein belongs to the class-I aminoacyl-tRNA synthetase family. Glutamate--tRNA ligase type 1 subfamily. In terms of assembly, monomer.

Its subcellular location is the cytoplasm. The catalysed reaction is tRNA(Glu) + L-glutamate + ATP = L-glutamyl-tRNA(Glu) + AMP + diphosphate. Its function is as follows. Catalyzes the attachment of glutamate to tRNA(Glu) in a two-step reaction: glutamate is first activated by ATP to form Glu-AMP and then transferred to the acceptor end of tRNA(Glu). This is Glutamate--tRNA ligase from Lactobacillus delbrueckii subsp. bulgaricus.